A 519-amino-acid polypeptide reads, in one-letter code: bZIP transcription factor 30 (519 aa).

5 disordered regions span residues methionine 1–histidine 30, phenylalanine 45–serine 83, threonine 108–glutamate 202, valine 222–histidine 295, and serine 315–alanine 339. Over residues glycine 51–serine 61 the composition is skewed to pro residues. Residues serine 149 to arginine 173 show a composition bias toward polar residues. Residues valine 187–glutamate 202 are compositionally biased toward basic and acidic residues. Low complexity-rich tracts occupy residues serine 244 to glycine 268 and leucine 317 to proline 329. Polar residues predominate over residues threonine 330–alanine 339. The interval lysine 372–arginine 393 is basic motif. The stretch at arginine 386–arginine 460 forms a coiled coil. The leucine-zipper stretch occupies residues leucine 398–leucine 433. Residues isoleucine 465 to aspartate 519 form a disordered region. 2 stretches are compositionally biased toward low complexity: residues serine 473–serine 483 and glutamine 490–serine 509.

Interacts with WUS, HEC1, KNAT1, KNAT2, HAT1, BEL1, and NGA1. As to expression, expressed in inflorescence meristem, floral organ primordia, gynoecia, ovules and carpel margin meristem.

The protein localises to the nucleus. In terms of biological role, transcription factor that acts as a repressor of reproductive development, meristem size and plant growth. Acts as a transcriptional repressor in inflorescence tissues. Interacts with well known regulators of meristem and gynoecium development such as WUS, HEC1, KNAT1, KNAT2, HAT1, BEL1 and NGA1. Acts as a positive regulator of JAG and OFP1 expression in developing gynoecia. This chain is bZIP transcription factor 30, found in Arabidopsis thaliana (Mouse-ear cress).